The chain runs to 277 residues: Putative gamma-glutamylcyclotransferase YkqA (277 aa).

A substrate-binding site is contributed by 8 to 11 (YGTL). The active-site Proton acceptor is the glutamate 205.

It belongs to the gamma-glutamylcyclotransferase family.

Its function is as follows. Putative gamma-glutamylcyclotransferase. This Bacillus subtilis (strain 168) protein is Putative gamma-glutamylcyclotransferase YkqA (ykqA).